Consider the following 546-residue polypeptide: 2-isopropylmalate synthase (546 aa).

The region spanning 8 to 271 (ILIFDTTLRD…NSFFKRNPDS (264 aa)) is the Pyruvate carboxyltransferase domain. The Mn(2+) site is built by D17, H208, H210, and N244. The interval 408-546 (QLSLVQVSCG…NNTYISNPAN (139 aa)) is regulatory domain.

Belongs to the alpha-IPM synthase/homocitrate synthase family. LeuA type 1 subfamily. Homodimer. The cofactor is Mn(2+).

Its subcellular location is the cytoplasm. The catalysed reaction is 3-methyl-2-oxobutanoate + acetyl-CoA + H2O = (2S)-2-isopropylmalate + CoA + H(+). It participates in amino-acid biosynthesis; L-leucine biosynthesis; L-leucine from 3-methyl-2-oxobutanoate: step 1/4. Its function is as follows. Catalyzes the condensation of the acetyl group of acetyl-CoA with 3-methyl-2-oxobutanoate (2-ketoisovalerate) to form 3-carboxy-3-hydroxy-4-methylpentanoate (2-isopropylmalate). This is 2-isopropylmalate synthase from Prochlorococcus marinus (strain MIT 9301).